A 687-amino-acid chain; its full sequence is Epithelial splicing regulatory protein 1 (687 aa).

3 consecutive RRM domains span residues Thr-226–Gly-303, Val-327–Ala-407, and Asp-446–Ala-526.

This sequence belongs to the ESRP family.

It is found in the nucleus. Functionally, mRNA splicing factor that regulates the formation of epithelial cell-specific isoforms. Specifically regulates the expression of FGFR2-IIIb, an epithelial cell-specific isoform of fgfr2. Acts by directly binding specific sequences in mRNAs. Binds the GU-rich sequence motifs in the ISE/ISS-3, a cis-element regulatory region present in the mRNA of fgfr2. This Xenopus tropicalis (Western clawed frog) protein is Epithelial splicing regulatory protein 1 (esrp1).